A 122-amino-acid chain; its full sequence is Large ribosomal subunit protein uL14 (122 aa).

The protein belongs to the universal ribosomal protein uL14 family. In terms of assembly, part of the 50S ribosomal subunit. Forms a cluster with proteins L3 and L19. In the 70S ribosome, L14 and L19 interact and together make contacts with the 16S rRNA in bridges B5 and B8.

In terms of biological role, binds to 23S rRNA. Forms part of two intersubunit bridges in the 70S ribosome. This Corynebacterium aurimucosum (strain ATCC 700975 / DSM 44827 / CIP 107346 / CN-1) (Corynebacterium nigricans) protein is Large ribosomal subunit protein uL14.